A 142-amino-acid chain; its full sequence is MFQGASALSLDAKGRMSIPSRHREALQQQAEGRVTLTKHPDGCLLLFPRPEWESFRQRIAALPMDAHWWKRIFLGNAADVEMDGAGRVLIAPELRGAAMLDKEVMLLGMGSHFEVWDAATYAAKEQQAMAQGMPEALKNFSF.

SpoVT-AbrB domains lie at 5–51 (ASAL…PRPE) and 77–120 (AADV…DAAT).

It belongs to the MraZ family. As to quaternary structure, forms oligomers.

It localises to the cytoplasm. The protein localises to the nucleoid. In Cupriavidus pinatubonensis (strain JMP 134 / LMG 1197) (Cupriavidus necator (strain JMP 134)), this protein is Transcriptional regulator MraZ.